Reading from the N-terminus, the 276-residue chain is Probable ribose-5-phosphate isomerase 3, chloroplastic (276 aa).

The N-terminal 39 residues, 1-39 (MASLSFVSSSHLTLRTPSIALRSTGSSPRTSVSFSVKAQ), are a transit peptide targeting the chloroplast. Ser-40 carries the post-translational modification N-acetylserine. A Phosphoserine modification is found at Ser-108.

It belongs to the ribose 5-phosphate isomerase family. In terms of processing, phosphorylated by SRK2C.

The protein localises to the plastid. It is found in the chloroplast. The catalysed reaction is aldehydo-D-ribose 5-phosphate = D-ribulose 5-phosphate. It participates in carbohydrate degradation; pentose phosphate pathway; D-ribose 5-phosphate from D-ribulose 5-phosphate (non-oxidative stage): step 1/1. Functionally, catalyzes the reversible conversion of ribose-5-phosphate to ribulose 5-phosphate. In Arabidopsis thaliana (Mouse-ear cress), this protein is Probable ribose-5-phosphate isomerase 3, chloroplastic (RPI3).